The following is a 137-amino-acid chain: Putative transcriptional regulatory protein MJ0173 (137 aa).

The protein belongs to the Tfx family.

Its function is as follows. Putative transcriptional regulator. In Methanocaldococcus jannaschii (strain ATCC 43067 / DSM 2661 / JAL-1 / JCM 10045 / NBRC 100440) (Methanococcus jannaschii), this protein is Putative transcriptional regulatory protein MJ0173.